A 295-amino-acid chain; its full sequence is Cell shape-determining protein MreC (295 aa).

A signal peptide spans 1 to 34; sequence MPQFFLNKRLIILLISIIVLVALVGFSLRDRENA. Residues 66-112 adopt a coiled-coil conformation; the sequence is VVDLKNTYTENQHLKERLEELAQLESEVADLKKENKDLKESLDITDS. Positions 276–295 are disordered; sequence SAEAGTTDDDTTSSDTTGGQ.

The protein belongs to the MreC family. In terms of assembly, homooligomer of 24 subunits, arranged as 12 dimers.

Functionally, involved in formation and maintenance of cell shape. In Listeria monocytogenes serovar 1/2a (strain ATCC BAA-679 / EGD-e), this protein is Cell shape-determining protein MreC.